The sequence spans 88 residues: MANTTSAKKATRKIARRTIVNKSRRTQMRGAVRIVEEAIASGDRDAALKAMIRAEPELMQAAQRNIVHKNTASRKVSRLSHQIAKLAK.

The protein belongs to the bacterial ribosomal protein bS20 family.

In terms of biological role, binds directly to 16S ribosomal RNA. The protein is Small ribosomal subunit protein bS20 of Rhodopseudomonas palustris (strain BisB18).